We begin with the raw amino-acid sequence, 37 residues long: Cytochrome b6-f complex subunit 5 (37 aa).

The chain crosses the membrane as a helical span at residues 5 to 25 (LLCGIVLGLIPVTLLGLFVAA).

It belongs to the PetG family. In terms of assembly, the 4 large subunits of the cytochrome b6-f complex are cytochrome b6, subunit IV (17 kDa polypeptide, PetD), cytochrome f and the Rieske protein, while the 4 small subunits are PetG, PetL, PetM and PetN. The complex functions as a dimer.

The protein resides in the cellular thylakoid membrane. Component of the cytochrome b6-f complex, which mediates electron transfer between photosystem II (PSII) and photosystem I (PSI), cyclic electron flow around PSI, and state transitions. PetG is required for either the stability or assembly of the cytochrome b6-f complex. In Synechococcus sp. (strain WH7803), this protein is Cytochrome b6-f complex subunit 5.